Here is a 94-residue protein sequence, read N- to C-terminus: Integration host factor subunit beta (94 aa).

It belongs to the bacterial histone-like protein family. Heterodimer of an alpha and a beta chain.

Functionally, this protein is one of the two subunits of integration host factor, a specific DNA-binding protein that functions in genetic recombination as well as in transcriptional and translational control. This chain is Integration host factor subunit beta, found in Serratia proteamaculans (strain 568).